Reading from the N-terminus, the 427-residue chain is Glutamate-1-semialdehyde 2,1-aminomutase (427 aa).

N6-(pyridoxal phosphate)lysine is present on Lys-265.

Belongs to the class-III pyridoxal-phosphate-dependent aminotransferase family. HemL subfamily. In terms of assembly, homodimer. It depends on pyridoxal 5'-phosphate as a cofactor.

It is found in the cytoplasm. The enzyme catalyses (S)-4-amino-5-oxopentanoate = 5-aminolevulinate. It participates in porphyrin-containing compound metabolism; protoporphyrin-IX biosynthesis; 5-aminolevulinate from L-glutamyl-tRNA(Glu): step 2/2. The sequence is that of Glutamate-1-semialdehyde 2,1-aminomutase from Burkholderia pseudomallei (strain 668).